A 192-amino-acid chain; its full sequence is MRFLSTDMKDRNMLFAAIPSICASSPKKISIYNEEMIVARCFIGFLIFSRKSLGKTFKETLDGRIESIQEELLQFFNPNEVIPEESNEQQRLLRISLRICSTVVESLPTARCAPKCEKTVQALLCRNLNVKSATLLNATSSRRIRLQDDIVTGFHFSVSERFVSGSTFKASTIDLIREGLIVLRKVRVGGSI.

A helical transmembrane segment spans residues 29–49; the sequence is ISIYNEEMIVARCFIGFLIFS.

Belongs to the ATPase protein MI25 family. F-type ATPases have 2 components, CF(1) - the catalytic core - and CF(0) - the membrane proton channel. CF(1) has five subunits: alpha(3), beta(3), gamma(1), delta(1), epsilon(1). CF(0) has three main subunits: a, b and c.

The protein resides in the mitochondrion membrane. In terms of biological role, this is one of the chains of the nonenzymatic component (CF(0) subunit) of the mitochondrial ATPase complex. This Triticum timopheevii (Timopheev's wheat) protein is ATP synthase protein MI25.